Reading from the N-terminus, the 228-residue chain is 2,3-bisphosphoglycerate-dependent phosphoglycerate mutase (228 aa).

Residues 8–15, 21–22, arginine 60, 87–90, lysine 98, 114–115, and 180–181 contribute to the substrate site; these read RHGQSQWN, TG, ERHY, RR, and GN. Histidine 9 acts as the Tele-phosphohistidine intermediate in catalysis. Glutamate 87 serves as the catalytic Proton donor/acceptor.

This sequence belongs to the phosphoglycerate mutase family. BPG-dependent PGAM subfamily. In terms of assembly, homodimer.

It catalyses the reaction (2R)-2-phosphoglycerate = (2R)-3-phosphoglycerate. It functions in the pathway carbohydrate degradation; glycolysis; pyruvate from D-glyceraldehyde 3-phosphate: step 3/5. Its function is as follows. Catalyzes the interconversion of 2-phosphoglycerate and 3-phosphoglycerate. This Erythrobacter litoralis (strain HTCC2594) protein is 2,3-bisphosphoglycerate-dependent phosphoglycerate mutase.